Reading from the N-terminus, the 437-residue chain is Sperm-associated antigen 4 protein (437 aa).

A compositionally biased stretch (low complexity) spans 1-12 (MRRSSRPGSASS). The tract at residues 1 to 88 (MRRSSRPGSA…KPAPRSHNWQ (88 aa)) is disordered. Composition is skewed to polar residues over residues 19 to 31 (NFFS…SITS) and 72 to 88 (WAGS…HNWQ). 2 helical membrane-spanning segments follow: residues 135-155 (FLSL…DVLV) and 166-186 (FLFT…LGLL). Positions 197-244 (KEMLTLSEYHERVRSQGQQLQQLQAELDKLHKEVSTVRAANSERVAKL) form a coiled coil. The SUN domain maps to 265 to 425 (GASIDLQKTS…YRVRAHGVRT (161 aa)).

Homodimer. Interacts with ODF1. May associate with microtubules. Interacts with SUN3 and SYNE1; suggesting the formation of a spermatogenesis-specific LINC complex; a SUN domain-based heterotrimer with SUN3 may associate with SYNE1. Interacts with SEPT12 and LMNB1; during spermatogenesis. As to expression, predominantly epressed in testis. Expressed in ejaculated spermatozoa (at protein level).

The protein resides in the membrane. It is found in the cytoplasm. It localises to the cytoskeleton. The protein localises to the flagellum axoneme. Its subcellular location is the nucleus envelope. The protein resides in the nucleus inner membrane. In terms of biological role, involved in spermatogenesis. Required for sperm head formation but not required to establish and maintain general polarity of the sperm head. Required for anchoring and organization of the manchette. Required for targeting of SUN3 and probably SYNE1 through a probable SUN1:SYNE3 LINC complex to the nuclear envelope and involved in accurate posterior sperm head localization of the complex. May anchor SUN3 the nuclear envelope. Involved in maintenance of the nuclear envelope integrity. May assist the organization and assembly of outer dense fibers (ODFs), a specific structure of the sperm tail. The polypeptide is Sperm-associated antigen 4 protein (SPAG4) (Homo sapiens (Human)).